A 203-amino-acid chain; its full sequence is Ribonuclease HII (203 aa).

An RNase H type-2 domain is found at 18-203; that stretch reads GHYAGVDEVG…SFRPVREALA (186 aa). The a divalent metal cation site is built by Asp-24, Glu-25, and Asp-116.

The protein belongs to the RNase HII family. It depends on Mn(2+) as a cofactor. Mg(2+) serves as cofactor.

The protein localises to the cytoplasm. The catalysed reaction is Endonucleolytic cleavage to 5'-phosphomonoester.. Functionally, endonuclease that specifically degrades the RNA of RNA-DNA hybrids. The chain is Ribonuclease HII from Shewanella halifaxensis (strain HAW-EB4).